The primary structure comprises 412 residues: Putative competence-damage inducible protein (412 aa).

The protein belongs to the CinA family.

The chain is Putative competence-damage inducible protein from Bacillus mycoides (strain KBAB4) (Bacillus weihenstephanensis).